The primary structure comprises 357 residues: Sulfate/thiosulfate import ATP-binding protein CysA (357 aa).

In terms of domain architecture, ABC transporter spans Ile3 to Leu237. Gly35–Thr42 serves as a coordination point for ATP.

It belongs to the ABC transporter superfamily. Sulfate/tungstate importer (TC 3.A.1.6) family. In terms of assembly, the complex is composed of two ATP-binding proteins (CysA), two transmembrane proteins (CysT and CysW) and a solute-binding protein (CysP).

The protein resides in the cell inner membrane. The enzyme catalyses sulfate(out) + ATP + H2O = sulfate(in) + ADP + phosphate + H(+). The catalysed reaction is thiosulfate(out) + ATP + H2O = thiosulfate(in) + ADP + phosphate + H(+). Its function is as follows. Part of the ABC transporter complex CysAWTP involved in sulfate/thiosulfate import. Responsible for energy coupling to the transport system. This Neisseria meningitidis serogroup A / serotype 4A (strain DSM 15465 / Z2491) protein is Sulfate/thiosulfate import ATP-binding protein CysA.